The primary structure comprises 312 residues: Malate dehydrogenase (312 aa).

NAD(+)-binding positions include 7 to 13 (GAAGGIG) and Asp34. Substrate contacts are provided by Arg81 and Arg87. NAD(+) is bound by residues Asn94 and 117 to 119 (ITN). Residues Asn119 and Arg153 each coordinate substrate. The active-site Proton acceptor is His177. Met227 is an NAD(+) binding site.

It belongs to the LDH/MDH superfamily. MDH type 1 family. Homodimer.

It carries out the reaction (S)-malate + NAD(+) = oxaloacetate + NADH + H(+). In terms of biological role, catalyzes the reversible oxidation of malate to oxaloacetate. In Escherichia coli O139:H28 (strain E24377A / ETEC), this protein is Malate dehydrogenase.